A 245-amino-acid chain; its full sequence is tRNA pseudouridine synthase A (245 aa).

The Nucleophile role is filled by aspartate 52. Tyrosine 111 is a substrate binding site.

It belongs to the tRNA pseudouridine synthase TruA family. In terms of assembly, homodimer.

The catalysed reaction is uridine(38/39/40) in tRNA = pseudouridine(38/39/40) in tRNA. In terms of biological role, formation of pseudouridine at positions 38, 39 and 40 in the anticodon stem and loop of transfer RNAs. This is tRNA pseudouridine synthase A from Thermotoga petrophila (strain ATCC BAA-488 / DSM 13995 / JCM 10881 / RKU-1).